The following is an 811-amino-acid chain: Ribonucleoside-diphosphate reductase large chain (811 aa).

One can recognise an ATP-cone domain in the interval 1-92; the sequence is MFVYKRDGRQ…VSNLHKQTEK (92 aa). Residues 5 to 6, 11 to 17, Thr-53, and Asp-57 each bind ATP; these read KR and EKVAFDK. Residues Ser-202 and Ser-217 each coordinate GDP. The cysteines at positions 218 and 444 are disulfide-linked. DTTP is bound by residues 226 to 228, Lys-243, Arg-256, and 263 to 264; these read DSI and AG. Position 427 (Asn-427) interacts with GDP. The active-site Proton acceptor is Asn-427. The Cysteine radical intermediate role is filled by Cys-429. GDP-binding positions include Glu-431 and 603-606; that span reads TAST. Catalysis depends on Glu-431, which acts as the Proton acceptor.

It belongs to the ribonucleoside diphosphate reductase large chain family. Heterodimer of a large and a small subunit. Interacts with SPD1.

The catalysed reaction is a 2'-deoxyribonucleoside 5'-diphosphate + [thioredoxin]-disulfide + H2O = a ribonucleoside 5'-diphosphate + [thioredoxin]-dithiol. Under complex allosteric control mediated by deoxynucleoside triphosphates and ATP binding to separate specificity and activation sites on the large subunit. The type of nucleotide bound at the specificity site determines substrate preference. It seems probable that ATP makes the enzyme reduce CDP and UDP, dGTP favors ADP reduction and dTTP favors GDP reduction. Stimulated by ATP and inhibited by dATP binding to the activity site. Functionally, provides the precursors necessary for DNA synthesis. Catalyzes the biosynthesis of deoxyribonucleotides from the corresponding ribonucleotides. This Schizosaccharomyces pombe (strain 972 / ATCC 24843) (Fission yeast) protein is Ribonucleoside-diphosphate reductase large chain (cdc22).